The following is a 328-amino-acid chain: MRPILMKGHERPLTFLRYNREGDLLFSCAKDHTPTLWFADNGERLGTYRGHNGAVWCCDVSRDSSRLITGSADQTAKLWDVKSGKELFTFKFNAPTRSVDFAVGDRLAVITTDHFVDRTAAIHVKRIAEDPEEQDAESVLVLHCPDGKKRINRAVWGPLNQTIVSGGEDKVIRIWDAETGKLLKQSDEEVGHKKDITSLCKAADDSHFLTGSLDKTAKLWDMRTLTLLKTYTTVVPVNAVSLSPLLNHVVLGGGQDASAVTTTDHRAGKFEAKFYDKILQEEIGGVKGHFGPINALAFNPDGKSFSSGGEDGYVRLHHFDSDYFNIKI.

5 WD repeats span residues 8-49 (GHER…GTYR), 50-89 (GHNG…ELFT), 146-185 (DGKK…LLKQ), 191-230 (GHKK…LLKT), and 288-327 (GHFG…FNIK).

It belongs to the eIF-3 subunit I family. Component of the eukaryotic translation initiation factor 3 (eIF-3) complex.

Its subcellular location is the cytoplasm. Functionally, component of the eukaryotic translation initiation factor 3 (eIF-3) complex, which is involved in protein synthesis of a specialized repertoire of mRNAs and, together with other initiation factors, stimulates binding of mRNA and methionyl-tRNAi to the 40S ribosome. The eIF-3 complex specifically targets and initiates translation of a subset of mRNAs involved in cell proliferation. The chain is Eukaryotic translation initiation factor 3 subunit I (TIF3I1) from Arabidopsis thaliana (Mouse-ear cress).